The chain runs to 175 residues: Major oleosin NAP-II (175 aa).

The tract at residues 1–47 is polar; the sequence is RRDQYPRDRDQYSMIGRDRDKYSMIGRDRDQYNMYGRDYSKSRQIAK. 2 repeats span residues 17-26 and 27-36; these read RDRDKYSMIG and RDRDQYNMYG. A hydrophobic region spans residues 48–119; that stretch reads AVTAVTAGGS…AAITVFSWIY (72 aa). Transmembrane regions (helical) follow at residues 56-76, 78-98, and 99-119; these read GSLL…LTVA, PLLV…ALLI, and TGFL…SWIY. The tract at residues 151–175 is disordered; sequence AQYYGQQQTGGEDDRDRTRGTQHTT.

This sequence belongs to the oleosin family.

The protein resides in the lipid droplet. It is found in the membrane. In terms of biological role, may have a structural role to stabilize the lipid body during desiccation of the seed by preventing coalescence of the oil. Probably interacts with both lipid and phospholipid moieties of lipid bodies. May also provide recognition signals for specific lipase anchorage in lipolysis during seedling growth. This chain is Major oleosin NAP-II, found in Brassica napus (Rape).